Here is a 368-residue protein sequence, read N- to C-terminus: Endoglucanase (368 aa).

An N-terminal signal peptide occupies residues 1 to 21; sequence MNVLRSGLVTMLLLAAFSVQA. Residue Glu-55 is the Proton donor of the active site. The Nucleophile role is filled by Asp-116.

Belongs to the glycosyl hydrolase 8 (cellulase D) family.

Its subcellular location is the secreted. The enzyme catalyses Endohydrolysis of (1-&gt;4)-beta-D-glucosidic linkages in cellulose, lichenin and cereal beta-D-glucans.. The protein operates within glycan metabolism; bacterial cellulose biosynthesis. Hydrolyzes carboxymethylcellulose. The polypeptide is Endoglucanase (bcsZ) (Escherichia coli O157:H7).